Reading from the N-terminus, the 190-residue chain is NADH dehydrogenase [ubiquinone] iron-sulfur protein 3 (190 aa).

It belongs to the complex I 30 kDa subunit family. As to quaternary structure, complex I is composed of about 45 different subunits. This is a component of the iron-sulfur (IP) fragment of the enzyme.

It localises to the mitochondrion inner membrane. The enzyme catalyses a ubiquinone + NADH + 5 H(+)(in) = a ubiquinol + NAD(+) + 4 H(+)(out). In terms of biological role, core subunit of the mitochondrial membrane respiratory chain NADH dehydrogenase (Complex I) that is believed to belong to the minimal assembly required for catalysis. Complex I functions in the transfer of electrons from NADH to the respiratory chain. The immediate electron acceptor for the enzyme is believed to be ubiquinone. The sequence is that of NADH dehydrogenase [ubiquinone] iron-sulfur protein 3 (NAD9) from Oryza sativa subsp. japonica (Rice).